The primary structure comprises 321 residues: Aspartate carbamoyltransferase catalytic subunit (321 aa).

Carbamoyl phosphate contacts are provided by arginine 65 and threonine 66. Lysine 93 is an L-aspartate binding site. Carbamoyl phosphate-binding residues include arginine 115, histidine 143, and glutamine 146. The L-aspartate site is built by arginine 176 and arginine 230. Carbamoyl phosphate is bound by residues glycine 271 and proline 272.

This sequence belongs to the aspartate/ornithine carbamoyltransferase superfamily. ATCase family. In terms of assembly, heterododecamer (2C3:3R2) of six catalytic PyrB chains organized as two trimers (C3), and six regulatory PyrI chains organized as three dimers (R2).

The enzyme catalyses carbamoyl phosphate + L-aspartate = N-carbamoyl-L-aspartate + phosphate + H(+). It functions in the pathway pyrimidine metabolism; UMP biosynthesis via de novo pathway; (S)-dihydroorotate from bicarbonate: step 2/3. Its function is as follows. Catalyzes the condensation of carbamoyl phosphate and aspartate to form carbamoyl aspartate and inorganic phosphate, the committed step in the de novo pyrimidine nucleotide biosynthesis pathway. This chain is Aspartate carbamoyltransferase catalytic subunit, found in Bartonella quintana (strain Toulouse) (Rochalimaea quintana).